Consider the following 203-residue polypeptide: DNA-directed RNA polymerase III subunit rpc8 (203 aa).

Belongs to the eukaryotic RPB7/RPC8 RNA polymerase subunit family. In terms of assembly, component of the RNA polymerase III (Pol III) complex consisting of 17 subunits. Rpc25/rpc8 and rpc17/rpc9 form a Pol III subcomplex.

It is found in the cytoplasm. It localises to the nucleus. DNA-dependent RNA polymerase catalyzes the transcription of DNA into RNA using the four ribonucleoside triphosphates as substrates. Specific peripheric component of RNA polymerase III which synthesizes small RNAs, such as 5S rRNA and tRNA. This chain is DNA-directed RNA polymerase III subunit rpc8 (rpc25), found in Schizosaccharomyces pombe (strain 972 / ATCC 24843) (Fission yeast).